The chain runs to 474 residues: Na(+)/H(+) antiporter NhaA 3 (474 aa).

11 helical membrane-spanning segments follow: residues 31–51 (VGGV…NIPA), 73–93 (LSVA…VAGI), 110–130 (AALP…VYTV), 141–161 (GWAV…AVIG), 171–191 (FLLT…AVFF), 194–214 (TLNF…WLLL), 220–240 (GWYV…NSGV), 280–300 (LAVP…GALA), 309–329 (LGVV…GTWL), 347–367 (VFAV…IGEL), and 378–398 (EVKA…TVLL).

The protein belongs to the NhaA Na(+)/H(+) (TC 2.A.33) antiporter family.

It localises to the cell membrane. It catalyses the reaction Na(+)(in) + 2 H(+)(out) = Na(+)(out) + 2 H(+)(in). Na(+)/H(+) antiporter that extrudes sodium in exchange for external protons. This Streptomyces coelicolor (strain ATCC BAA-471 / A3(2) / M145) protein is Na(+)/H(+) antiporter NhaA 3.